The chain runs to 166 residues: Protein C2-DOMAIN ABA-RELATED 11 (166 aa).

N-acetylmethionine is present on Met1. Residues 1 to 103 (MGEPLGLLQV…ISVARLRHVV (103 aa)) form the C2 domain. Gly2 carries the post-translational modification N-acetylglycine; in Protein C2-DOMAIN ABA-RELATED 11, N-terminally processed. Arg21, Asp22, Asp27, Asp73, Lys74, Asp75, and Asp81 together coordinate Ca(2+).

It belongs to the plant CAR protein family. Binds to PYR/PYL/RCAR abscisic acid intracellular receptors in an ABA-independent manner, both at the plasma membrane and in the nucleus.

It is found in the cell membrane. The protein localises to the nucleus. Its function is as follows. Stimulates the GTPase/ATPase activities of Obg-like ATPases. Mediates the transient calcium-dependent interaction of PYR/PYL/RCAR abscisic acid (ABA) receptors with the plasma membrane and thus regulates ABA sensitivity. This is Protein C2-DOMAIN ABA-RELATED 11 from Arabidopsis thaliana (Mouse-ear cress).